Consider the following 334-residue polypeptide: S-adenosylmethionine decarboxylase proenzyme (334 aa).

F7 provides a ligand contact to substrate. Catalysis depends on residues E8 and E11. Residue E67 participates in substrate binding. The active-site Schiff-base intermediate with substrate; via pyruvic acid is S68. S68 is modified (pyruvic acid (Ser); by autocatalysis). The active-site Proton donor; for catalytic activity is the C82. Position 223 (F223) interacts with substrate. Residues S229 and H243 each act as proton acceptor; for processing activity in the active site. E247 is a substrate binding site. S298 is subject to Phosphoserine.

The protein belongs to the eukaryotic AdoMetDC family. As to quaternary structure, heterotetramer of two alpha and two beta chains. Requires pyruvate as cofactor. Is synthesized initially as an inactive proenzyme. Formation of the active enzyme involves a self-maturation process in which the active site pyruvoyl group is generated from an internal serine residue via an autocatalytic post-translational modification. Two non-identical subunits are generated from the proenzyme in this reaction, and the pyruvate is formed at the N-terminus of the alpha chain, which is derived from the carboxyl end of the proenzyme. The post-translation cleavage follows an unusual pathway, termed non-hydrolytic serinolysis, in which the side chain hydroxyl group of the serine supplies its oxygen atom to form the C-terminus of the beta chain, while the remainder of the serine residue undergoes an oxidative deamination to produce ammonia and the pyruvoyl group blocking the N-terminus of the alpha chain.

It catalyses the reaction S-adenosyl-L-methionine + H(+) = S-adenosyl 3-(methylsulfanyl)propylamine + CO2. The protein operates within amine and polyamine biosynthesis; S-adenosylmethioninamine biosynthesis; S-adenosylmethioninamine from S-adenosyl-L-methionine: step 1/1. Essential for biosynthesis of the polyamines spermidine and spermine. Promotes maintenance and self-renewal of embryonic stem cells, by maintaining spermine levels. In Mesocricetus auratus (Golden hamster), this protein is S-adenosylmethionine decarboxylase proenzyme (AMD1).